Consider the following 386-residue polypeptide: Bifunctional enzyme IspD/IspF (386 aa).

The tract at residues 1 to 226 (MATPSPLPSF…EDFMADLLPV (226 aa)) is 2-C-methyl-D-erythritol 4-phosphate cytidylyltransferase. The tract at residues 227–386 (RVGTGFDVHK…ATVVRKDTPA (160 aa)) is 2-C-methyl-D-erythritol 2,4-cyclodiphosphate synthase. 2 residues coordinate a divalent metal cation: D233 and H235. Residues 233–235 (DVH) and 259–260 (HS) each bind 4-CDP-2-C-methyl-D-erythritol 2-phosphate. H267 provides a ligand contact to a divalent metal cation. 4-CDP-2-C-methyl-D-erythritol 2-phosphate contacts are provided by residues 281 to 283 (DIG), 357 to 360 (TTTE), F364, and R367.

In the N-terminal section; belongs to the IspD/TarI cytidylyltransferase family. IspD subfamily. It in the C-terminal section; belongs to the IspF family. The cofactor is a divalent metal cation.

The enzyme catalyses 2-C-methyl-D-erythritol 4-phosphate + CTP + H(+) = 4-CDP-2-C-methyl-D-erythritol + diphosphate. The catalysed reaction is 4-CDP-2-C-methyl-D-erythritol 2-phosphate = 2-C-methyl-D-erythritol 2,4-cyclic diphosphate + CMP. It functions in the pathway isoprenoid biosynthesis; isopentenyl diphosphate biosynthesis via DXP pathway; isopentenyl diphosphate from 1-deoxy-D-xylulose 5-phosphate: step 2/6. The protein operates within isoprenoid biosynthesis; isopentenyl diphosphate biosynthesis via DXP pathway; isopentenyl diphosphate from 1-deoxy-D-xylulose 5-phosphate: step 4/6. Bifunctional enzyme that catalyzes the formation of 4-diphosphocytidyl-2-C-methyl-D-erythritol from CTP and 2-C-methyl-D-erythritol 4-phosphate (MEP) (IspD), and catalyzes the conversion of 4-diphosphocytidyl-2-C-methyl-D-erythritol 2-phosphate (CDP-ME2P) to 2-C-methyl-D-erythritol 2,4-cyclodiphosphate (ME-CPP) with a corresponding release of cytidine 5-monophosphate (CMP) (IspF). The polypeptide is Bifunctional enzyme IspD/IspF (Erythrobacter litoralis (strain HTCC2594)).